The sequence spans 839 residues: Protein translocase subunit SecA (839 aa).

ATP-binding positions include Q85, 103–107 (GEGKT), and D493. Residues 780 to 790 (QIHEQERERAS) show a composition bias toward basic and acidic residues. The interval 780 to 839 (QIHEQERERASQRATTAAPQNIQSQQSANTDDLPKVERNEACPCGSGKKFKNCHGRKSFS) is disordered. Positions 791 to 809 (QRATTAAPQNIQSQQSANT) are enriched in polar residues. Zn(2+) is bound by residues C821, C823, C832, and H833. Positions 827–839 (KKFKNCHGRKSFS) are enriched in basic residues.

This sequence belongs to the SecA family. In terms of assembly, monomer and homodimer. Part of the essential Sec protein translocation apparatus which comprises SecA, SecYEG and auxiliary proteins SecDF. Other proteins may also be involved. Zn(2+) is required as a cofactor.

The protein resides in the cell membrane. The protein localises to the cytoplasm. The enzyme catalyses ATP + H2O + cellular proteinSide 1 = ADP + phosphate + cellular proteinSide 2.. In terms of biological role, part of the Sec protein translocase complex. Interacts with the SecYEG preprotein conducting channel. Has a central role in coupling the hydrolysis of ATP to the transfer of proteins into and across the cell membrane, serving as an ATP-driven molecular motor driving the stepwise translocation of polypeptide chains across the membrane. This is Protein translocase subunit SecA from Streptococcus pyogenes serotype M3 (strain ATCC BAA-595 / MGAS315).